The primary structure comprises 356 residues: GDP-mannose:di-myo-inositol-1,3'-phosphate beta-1,2-mannosyltransferase (356 aa).

This sequence belongs to the MDIP synthase family. The cofactor is Mg(2+).

It catalyses the reaction bis(myo-inositol) 1,3'-phosphate + GDP-alpha-D-mannose = 2-O-(beta-D-mannosyl)-bis(myo-inositol) 1,3'-phosphate + GDP + H(+). The enzyme catalyses 2-O-(beta-D-mannosyl)-bis(myo-inositol) 1,3'-phosphate + GDP-alpha-D-mannose = 2-O-(beta-D-mannosyl-(1-&gt;2)-beta-D-mannosyl)-bis(myo-inositol) 1,3'-phosphate + GDP + H(+). It carries out the reaction bis(myo-inositol) 1,3'-phosphate + 2 GDP-alpha-D-mannose = 2-O-(beta-D-mannosyl-(1-&gt;2)-beta-D-mannosyl)-bis(myo-inositol) 1,3'-phosphate + 2 GDP + 2 H(+). Catalyzes the transfer of the mannosyl group from GDP-mannose to di-myo-inositol-1,3'-phosphate (DIP), producing mannosyl-di-myo-inositol phosphate (MDIP). Can also use MDIP as an acceptor of a second mannose residue, yielding di-mannosyl-di-myo-inositol phosphate (MMDIP). The chain is GDP-mannose:di-myo-inositol-1,3'-phosphate beta-1,2-mannosyltransferase from Aquifex aeolicus (strain VF5).